A 357-amino-acid polypeptide reads, in one-letter code: Protein RecA (357 aa).

Position 67 to 74 (67 to 74 (GPESSGKT)) interacts with ATP. Positions 334-357 (ELKPAAAGNSHDEDELAGEGKEEF) are disordered.

It belongs to the RecA family.

The protein resides in the cytoplasm. Its function is as follows. Can catalyze the hydrolysis of ATP in the presence of single-stranded DNA, the ATP-dependent uptake of single-stranded DNA by duplex DNA, and the ATP-dependent hybridization of homologous single-stranded DNAs. It interacts with LexA causing its activation and leading to its autocatalytic cleavage. The protein is Protein RecA of Pectobacterium atrosepticum (strain SCRI 1043 / ATCC BAA-672) (Erwinia carotovora subsp. atroseptica).